Here is a 78-residue protein sequence, read N- to C-terminus: ATP synthase subunit a (78 aa).

The next 3 helical transmembrane spans lie at Leu13–Ser33, Phe35–Ile55, and Ser57–Ala77.

This sequence belongs to the ATPase A chain family. F-type ATPases have 2 components, CF(1) - the catalytic core - and CF(0) - the membrane proton channel. CF(1) has five subunits: alpha(3), beta(3), gamma(1), delta(1), epsilon(1). CF(0) has three main subunits: a(1), b(2) and c(9-12). The alpha and beta chains form an alternating ring which encloses part of the gamma chain. CF(1) is attached to CF(0) by a central stalk formed by the gamma and epsilon chains, while a peripheral stalk is formed by the delta and b chains.

It is found in the cell membrane. Functionally, key component of the proton channel; it plays a direct role in the translocation of protons across the membrane. The chain is ATP synthase subunit a (atpB) from Alkalihalobacillus alcalophilus (Bacillus alcalophilus).